The following is a 638-amino-acid chain: Chaperone protein DnaK (638 aa).

A Phosphothreonine; by autocatalysis modification is found at Thr-199. A disordered region spans residues 600–638; sequence EINQKKSEENLKKEDTSSESKKDENVVDAEFEEIKDPKK. A compositionally biased stretch (basic and acidic residues) spans 602 to 624; that stretch reads NQKKSEENLKKEDTSSESKKDEN.

It belongs to the heat shock protein 70 family.

Its function is as follows. Acts as a chaperone. The sequence is that of Chaperone protein DnaK from Buchnera aphidicola subsp. Schizaphis graminum (strain Sg).